The following is a 339-amino-acid chain: Aspartate carbamoyltransferase catalytic subunit (339 aa).

Carbamoyl phosphate contacts are provided by Arg69 and Thr70. Lys97 provides a ligand contact to L-aspartate. The carbamoyl phosphate site is built by Arg119, His149, and Gln152. L-aspartate contacts are provided by Arg182 and Arg237. Carbamoyl phosphate-binding residues include Gly278 and Pro279.

The protein belongs to the aspartate/ornithine carbamoyltransferase superfamily. ATCase family. In terms of assembly, heterododecamer (2C3:3R2) of six catalytic PyrB chains organized as two trimers (C3), and six regulatory PyrI chains organized as three dimers (R2).

The catalysed reaction is carbamoyl phosphate + L-aspartate = N-carbamoyl-L-aspartate + phosphate + H(+). It participates in pyrimidine metabolism; UMP biosynthesis via de novo pathway; (S)-dihydroorotate from bicarbonate: step 2/3. In terms of biological role, catalyzes the condensation of carbamoyl phosphate and aspartate to form carbamoyl aspartate and inorganic phosphate, the committed step in the de novo pyrimidine nucleotide biosynthesis pathway. The polypeptide is Aspartate carbamoyltransferase catalytic subunit (Hydrogenovibrio crunogenus (strain DSM 25203 / XCL-2) (Thiomicrospira crunogena)).